The primary structure comprises 1080 residues: MSSQSHPDGLSGRDQPVELLNPPRVNHMPSSVDVSTALPLQVAPTSVPMDLRLDHQFPMPVTEPTLREQQLQQELLALKQKQQIQRQILIAEFQRQHEQLSRQHEAQLHEHIKQQEMLAMKHQQELLEHQRKLEQHRQEQELEKQHREQKLQQLKNKEKGKESAVASTEVKMKLQEFVLNKKKALAHRNLNHCISSDPRFWYGKTQHSSLDQSSPPQSGVSGTYNHPVLGMYDSKDDFPLRKTASEPNLKLRSRLKQKVAERRSSPLLRRKDGPVVTALKKRPLDVTDSACNSAPGSGPSSPNNSSNNISAENGITGSVTSIQAETSLAHRLVNREGSVTQLPLYTSPSLPNITLGLPATGPSSGGSAQQDAERLAIPALQQRISLFPGTHLTPYLSTTTLERDGGTAHNPLLQHMVLLEQPTAQTPLVTGLPLHAQSLVGGERVSPSIHKLRQHRPLGRTQSAPLPQNAQALQQLVIQQQHQQFLEKHKQQFQQQQLHINKIISKPNEPARQHESHPEETEEELREHQALLEEPYSDRVSSQKEVPGLANMVQVKQEPIESDEEEAEPQQELESGQRQAEQELLFRQQALLLEQQRIHQLRNYQASLEAAGMPVSFGGHRPLSRAQSSPASATFPMSVQEPPTKPRFTTGLVYDTLMLKHQCTCGNTNSHPEHAGRIQSIWSRLQETGLRGKCECIRGRKATLEELQTVHSEAHTLLYGTNPLNRQKLDSKKLLGSLTSMFVRLPCGGVGVDSDTIWNEVHSSGAARLAVGCVIELVFKVATGELKNGFAVVRPPGHHAEESTPMGFCYFNSVAIAAKLLQQRLNVSKILIVDWDVHHGNGTQQAFYNDPNVLYISLHRYDDGNFFPGSGAPDEVGTGAGVGFNVNMAFTGGLDPPMGDTEYLTAFRTVVMPIANEFAPDVVLVSSGFDAVEGHPTPLGGYNLSAKCFGYLTKQLMGLAGGRVVLALEGGHDLTAICDASEACVSALLGNELDPLPEKVLQQRANANAVHSMEKVIEIHSKYWHSLQRYASTVGYSLVEAQKCENEEAETVTAMASLSVGVKPAEKRPDDEPMEEEPPL.

3 disordered regions span residues 1–25 (MSSQ…PPRV), 132–165 (KLEQ…ESAV), and 205–312 (TQHS…ISAE). Residues 132-162 (KLEQHRQEQELEKQHREQKLQQLKNKEKGKE) show a composition bias toward basic and acidic residues. Polar residues predominate over residues 205–224 (TQHSSLDQSSPPQSGVSGTY). Basic and acidic residues-rich tracts occupy residues 233–244 (DSKDDFPLRKTA) and 258–273 (KVAE…RKDG). The span at 289-312 (SACNSAPGSGPSSPNNSSNNISAE) shows a compositional bias: low complexity. The short motif at 348 to 353 (PSLPNI) is the PxLPxI/L element. Disordered regions lie at residues 506–527 (KPNE…ELRE), 558–579 (EPIE…GQRQ), and 622–646 (PLSR…PTKP). Over residues 509–527 (EPARQHESHPEETEEELRE) the composition is skewed to basic and acidic residues. The segment covering 560-571 (IESDEEEAEPQQ) has biased composition (acidic residues). Residues 625–637 (RAQSSPASATFPM) show a composition bias toward polar residues. Residues 651–1080 (GLVYDTLMLK…DEPMEEEPPL (430 aa)) form a histone deacetylase region. Zn(2+) contacts are provided by Cys-663, Cys-665, His-671, and Cys-747. The active site involves His-799. A disordered region spans residues 1055-1080 (MASLSVGVKPAEKRPDDEPMEEEPPL).

The protein belongs to the histone deacetylase family. HD type 2 subfamily.

It is found in the nucleus. The catalysed reaction is N(6)-acetyl-L-lysyl-[histone] + H2O = L-lysyl-[histone] + acetate. Its function is as follows. Responsible for the deacetylation of lysine residues on the N-terminal part of the core histones (H2A, H2B, H3 and H4). Histone deacetylation gives a tag for epigenetic repression and plays an important role in transcriptional regulation, cell cycle progression and developmental events. Histone deacetylases act via the formation of large multiprotein complexes. This is Histone deacetylase 4 (HDAC4) from Gallus gallus (Chicken).